A 360-amino-acid polypeptide reads, in one-letter code: Phospho-N-acetylmuramoyl-pentapeptide-transferase (360 aa).

The next 10 helical transmembrane spans lie at 27–47 (IVSL…LIAW), 72–92 (PTMG…MWAY), 94–114 (SNPY…VGFI), 132–152 (WKYF…YSIG), 168–188 (IMPQ…VGTS), 199–219 (GLAI…AWAT), 236–256 (AGEL…FLWF), 263–283 (VFMG…IAVL), 288–308 (FLLV…ILQV), and 338–358 (VIVR…ATLK).

The protein belongs to the glycosyltransferase 4 family. MraY subfamily. Mg(2+) is required as a cofactor.

It is found in the cell inner membrane. It catalyses the reaction UDP-N-acetyl-alpha-D-muramoyl-L-alanyl-gamma-D-glutamyl-meso-2,6-diaminopimeloyl-D-alanyl-D-alanine + di-trans,octa-cis-undecaprenyl phosphate = di-trans,octa-cis-undecaprenyl diphospho-N-acetyl-alpha-D-muramoyl-L-alanyl-D-glutamyl-meso-2,6-diaminopimeloyl-D-alanyl-D-alanine + UMP. The protein operates within cell wall biogenesis; peptidoglycan biosynthesis. Its function is as follows. Catalyzes the initial step of the lipid cycle reactions in the biosynthesis of the cell wall peptidoglycan: transfers peptidoglycan precursor phospho-MurNAc-pentapeptide from UDP-MurNAc-pentapeptide onto the lipid carrier undecaprenyl phosphate, yielding undecaprenyl-pyrophosphoryl-MurNAc-pentapeptide, known as lipid I. The sequence is that of Phospho-N-acetylmuramoyl-pentapeptide-transferase from Yersinia pseudotuberculosis serotype O:1b (strain IP 31758).